A 381-amino-acid polypeptide reads, in one-letter code: Creatine kinase M-type (381 aa).

Residues 11–98 form the Phosphagen kinase N-terminal domain; that stretch reads KLKFSAEEEF…FDPVIQDRHG (88 aa). The tract at residues 99 to 118 is disordered; sequence GYKPTDKHRTDLNHENLKGG. The Phosphagen kinase C-terminal domain occupies 125-367; sequence YVLSSRVRTG…KLMVEMEKKL (243 aa). ATP is bound by residues 128–132, His191, Arg236, Arg292, 320–325, and Asp335; these read SSRVR and RGTGGV.

It belongs to the ATP:guanido phosphotransferase family. Dimer of identical or non-identical chains, which can be either B (brain type) or M (muscle type). With MM being the major form in skeletal muscle and myocardium, MB existing in myocardium, and BB existing in many tissues, especially brain. In terms of tissue distribution, predominantly found in skeletal muscle, but not in the heart.

Its subcellular location is the cytoplasm. It catalyses the reaction creatine + ATP = N-phosphocreatine + ADP + H(+). Its function is as follows. Reversibly catalyzes the transfer of phosphate between ATP and various phosphogens (e.g. creatine phosphate). Creatine kinase isoenzymes play a central role in energy transduction in tissues with large, fluctuating energy demands, such as skeletal muscle, heart, brain and spermatozoa. In Gallus gallus (Chicken), this protein is Creatine kinase M-type.